Reading from the N-terminus, the 352-residue chain is Spermidine/putrescine import ATP-binding protein PotA (352 aa).

The ABC transporter domain occupies I7–I237. G39–T46 contributes to the ATP binding site.

The protein belongs to the ABC transporter superfamily. Spermidine/putrescine importer (TC 3.A.1.11.1) family. As to quaternary structure, the complex is composed of two ATP-binding proteins (PotA), two transmembrane proteins (PotB and PotC) and a solute-binding protein (PotD).

The protein localises to the cell membrane. It carries out the reaction ATP + H2O + polyamine-[polyamine-binding protein]Side 1 = ADP + phosphate + polyamineSide 2 + [polyamine-binding protein]Side 1.. Functionally, part of the ABC transporter complex PotABCD involved in spermidine/putrescine import. Responsible for energy coupling to the transport system. The sequence is that of Spermidine/putrescine import ATP-binding protein PotA from Acetivibrio thermocellus (strain ATCC 27405 / DSM 1237 / JCM 9322 / NBRC 103400 / NCIMB 10682 / NRRL B-4536 / VPI 7372) (Clostridium thermocellum).